The primary structure comprises 474 residues: Dol-P-Glc:Glc(2)Man(9)GlcNAc(2)-PP-Dol alpha-1,2-glucosyltransferase (474 aa).

Residues 1–6 (MAQLEG) lie on the Cytoplasmic side of the membrane. A helical transmembrane segment spans residues 7–27 (YYFSAALSCTFLVSCLLFSAF). Over 28 to 64 (SRALREPYMDEIFHLPQAQRYCEGRFSLSQWDPMITT) the chain is Extracellular. The helical transmembrane segment at 65–85 (LPGLYLVSVGVVKPASWILGW) threads the bilayer. At 86–97 (SEHVVCSIGMLR) the chain is on the cytoplasmic side. A helical transmembrane segment spans residues 98–118 (FVNLLFSVGNFYLLYLLFRKI). Residues 119 to 126 (QPRNKASS) lie on the Extracellular side of the membrane. A helical transmembrane segment spans residues 127–147 (SIQRILSTLTLAVFPTLYFFN). The Cytoplasmic segment spans residues 148 to 150 (FLY). A helical transmembrane segment spans residues 151 to 171 (YTEAGSVFFTLFAYLMCLYGN). The Extracellular segment spans residues 172 to 175 (HRTS). A helical membrane pass occupies residues 176 to 196 (ALLGFCGFMFRQTNIIWAAFC). The Cytoplasmic segment spans residues 197–256 (AGHIIAQKCSEAWKTELQKKKEERLPPAKGPLSELRRVLQFLLMYSMSLKNLSMLFLLTW). The chain crosses the membrane as a helical span at residues 257–277 (PYMLLLLAFFVFVVVNGGIVV). Over 278–283 (GDRSSH) the chain is Extracellular. Residues 284–304 (EACLHFPQLFYFFSFTAFFSF) traverse the membrane as a helical segment. Over 305-317 (PHLLSPTKVKTFL) the chain is Cytoplasmic. The helical transmembrane segment at 318–338 (SLVWKRRVQFSVITLVSVFLV) threads the bilayer. The Extracellular portion of the chain corresponds to 339 to 365 (WKFTYVHKYLLADNRHYTFYVWKRVFQ). A helical membrane pass occupies residues 366-386 (RHEIVKYLLVPAYMFAGWAVA). Over 387–392 (DSLKSK) the chain is Cytoplasmic. A helical membrane pass occupies residues 393-413 (SIFWNLMFFVCLVASTVPQKL). Residues 414–436 (LEFRYFILPYIIYRLNMPLPPIS) are Extracellular-facing. Residues 437 to 457 (RLVCELGCYAVVNFLTFYIFL) traverse the membrane as a helical segment. Over 458–473 (NKTFQWSDSHDIQRFM) the chain is Cytoplasmic.

This sequence belongs to the ALG10 glucosyltransferase family. Interacts with KCNH1; may regulate KCNH1, possibly by regulating its N-glycosylation. Interacts with KCNH2; may reduce KCNH2 sensitivity to classic proarrhythmic drug blockade, possibly by regulating its N-glycosylation. In terms of tissue distribution, highly expressed in brain, skeletal muscle, uterus, small intestine and liver. Moderately expressed in lung and kidney. Weakly expressed in heart and stomach.

It is found in the endoplasmic reticulum membrane. It carries out the reaction an alpha-D-Glc-(1-&gt;3)-alpha-D-Glc-(1-&gt;3)-alpha-D-Man-(1-&gt;2)-alpha-D-Man-(1-&gt;2)-alpha-D-Man-(1-&gt;3)-[alpha-D-Man-(1-&gt;2)-alpha-D-Man-(1-&gt;3)-[alpha-D-Man-(1-&gt;2)-alpha-D-Man-(1-&gt;6)]-alpha-D-Man-(1-&gt;6)]-beta-D-Man-(1-&gt;4)-beta-D-GlcNAc-(1-&gt;4)-alpha-D-GlcNAc-diphospho-di-trans,poly-cis-dolichol + a di-trans,poly-cis-dolichyl beta-D-glucosyl phosphate = a alpha-D-Glc-(1-&gt;2)-alpha-D-Glc-(1-&gt;3)-alpha-D-Glc-(1-&gt;3)-alpha-D-Man-(1-&gt;2)-alpha-D-Man-(1-&gt;2)-alpha-D-Man-(1-&gt;3)-[alpha-D-Man-(1-&gt;2)-alpha-D-Man-(1-&gt;3)-[alpha-D-Man-(1-&gt;2)-alpha-D-Man-(1-&gt;6)]-alpha-D-Man-(1-&gt;6)]-beta-D-Man-(1-&gt;4)-beta-D-GlcNAc-(1-&gt;4)-alpha-D-GlcNAc-diphospho-di-trans,poly-cis-dolichol + a di-trans,poly-cis-dolichyl phosphate + H(+). The protein operates within protein modification; protein glycosylation. Functionally, dol-P-Glc:Glc(2)Man(9)GlcNAc(2)-PP-Dol alpha-1,2-glucosyltransferase that operates in the biosynthetic pathway of dolichol-linked oligosaccharides, the glycan precursors employed in protein asparagine (N)-glycosylation. The assembly of dolichol-linked oligosaccharides begins on the cytosolic side of the endoplasmic reticulum membrane and finishes in its lumen. The sequential addition of sugars to dolichol pyrophosphate produces dolichol-linked oligosaccharides containing fourteen sugars, including two GlcNAcs, nine mannoses and three glucoses. Once assembled, the oligosaccharide is transferred from the lipid to nascent proteins by oligosaccharyltransferases. In the lumen of the endoplasmic reticulum, adds the third and last glucose residue from dolichyl phosphate glucose (Dol-P-Glc) onto the lipid-linked oligosaccharide intermediate Glc(2)Man(9)GlcNAc(2)-PP-Dol to produce Glc(3)Man(9)GlcNAc(2)-PP-Dol. This is Dol-P-Glc:Glc(2)Man(9)GlcNAc(2)-PP-Dol alpha-1,2-glucosyltransferase from Rattus norvegicus (Rat).